Reading from the N-terminus, the 291-residue chain is 3-hydroxy-5-phosphonooxypentane-2,4-dione thiolase (291 aa).

The active-site Schiff-base intermediate with substrate is the lysine 203.

Belongs to the DeoC/FbaB aldolase family. Homodecamer.

The protein localises to the cytoplasm. The catalysed reaction is dihydroxyacetone phosphate + acetyl-CoA = 3-hydroxy-2,4-dioxopentyl phosphate + CoA. Its function is as follows. Involved in the degradation of phospho-AI-2, thereby terminating induction of the lsr operon and closing the AI-2 signaling cycle. Catalyzes the transfer of an acetyl moiety from 3-hydroxy-5-phosphonooxypentane-2,4-dione to CoA to form glycerone phosphate and acetyl-CoA. In Salmonella paratyphi A (strain ATCC 9150 / SARB42), this protein is 3-hydroxy-5-phosphonooxypentane-2,4-dione thiolase.